The chain runs to 834 residues: ABC transporter A family member 11 (834 aa).

The next 7 helical transmembrane spans lie at 35 to 55 (FFILGILLPMISIGASIILNN), 188 to 208 (MPMILQYGFVFFIPYFAILIV), 235 to 255 (VFDYLIFLIPTIIGWILLYSF), 269 to 289 (FLLFLTFGISAIPFGFVLQFI), 297 to 319 (NKWLYPFTSIVTSIPSALISVAF), 324 to 346 (PLIVELLLSILPTFSFCNGLKAL), and 355 to 375 (SYTILIQLLSGLIYLILIYFI). The region spanning 452 to 693 (LDKPSIIERC…YGSGYTIDII (242 aa)) is the ABC transporter domain. 495-502 (GPNGSGKS) contacts ATP. Over residues 779–789 (KQQTNNKSNII) the composition is skewed to polar residues. A disordered region spans residues 779 to 834 (KQQTNNKSNIINNNNNNNNNNNNNNNNNNNNNNNNNNNNNNNNNTNNNTNNNQLIN). Over residues 790–834 (NNNNNNNNNNNNNNNNNNNNNNNNNNNNNNNNNTNNNTNNNQLIN) the composition is skewed to low complexity.

It belongs to the ABC transporter superfamily. ABCA family.

The protein resides in the membrane. The protein is ABC transporter A family member 11 (abcA11) of Dictyostelium discoideum (Social amoeba).